A 269-amino-acid polypeptide reads, in one-letter code: Ribosomal RNA small subunit methyltransferase A (269 aa).

S-adenosyl-L-methionine contacts are provided by Asn18, Leu20, Gly45, Glu66, Asp91, and Asn112.

The protein belongs to the class I-like SAM-binding methyltransferase superfamily. rRNA adenine N(6)-methyltransferase family. RsmA subfamily.

Its subcellular location is the cytoplasm. The enzyme catalyses adenosine(1518)/adenosine(1519) in 16S rRNA + 4 S-adenosyl-L-methionine = N(6)-dimethyladenosine(1518)/N(6)-dimethyladenosine(1519) in 16S rRNA + 4 S-adenosyl-L-homocysteine + 4 H(+). Functionally, specifically dimethylates two adjacent adenosines (A1518 and A1519) in the loop of a conserved hairpin near the 3'-end of 16S rRNA in the 30S particle. May play a critical role in biogenesis of 30S subunits. In Vibrio parahaemolyticus serotype O3:K6 (strain RIMD 2210633), this protein is Ribosomal RNA small subunit methyltransferase A.